The following is a 362-amino-acid chain: MEPLSLTSTPSWNASAASSSSHNWSLVDPVSPMGARAVLVPVLYLLVCTVGLGGNTLVIYVVLRYAKMKTVTNVYILNLAVADVLFMLGLPFLATQNAVSYWPFGSFLCRLVMTLDGINQFTSIFCLMVMSVDRYLAVVHPLRSARWRRPRVAKLASAAVWVFSLLMSLPLLVFADVQEGWGTCNLSWPEPVGLWGAAFITYTSVLGFFGPLLVICLCYLLIVVKVKAAGMRVGSSRRRRSERKVTRMVVVVVLVFVGCWLPFFIVNIVNLAFTLPEEPTSAGLYFFVVVLSYANSCANPLLYGFLSDNFRQSFRKALCLRRGYGVEDADAIEPRPDKSGRPQTTLPTRSCEANGLMQTSRL.

Residues 1 to 10 (MEPLSLTSTP) show a composition bias toward polar residues. A disordered region spans residues 1-24 (MEPLSLTSTPSWNASAASSSSHNW). Topologically, residues 1 to 35 (MEPLSLTSTPSWNASAASSSSHNWSLVDPVSPMGA) are extracellular. A compositionally biased stretch (low complexity) spans 11-24 (SWNASAASSSSHNW). 2 N-linked (GlcNAc...) asparagine glycosylation sites follow: asparagine 13 and asparagine 23. The helical transmembrane segment at 36 to 63 (RAVLVPVLYLLVCTVGLGGNTLVIYVVL) threads the bilayer. Residues 64-73 (RYAKMKTVTN) lie on the Cytoplasmic side of the membrane. The helical transmembrane segment at 74-99 (VYILNLAVADVLFMLGLPFLATQNAV) threads the bilayer. Topologically, residues 100-110 (SYWPFGSFLCR) are extracellular. A disulfide bond links cysteine 109 and cysteine 184. Residues 111–132 (LVMTLDGINQFTSIFCLMVMSV) form a helical membrane-spanning segment. Over 133–154 (DRYLAVVHPLRSARWRRPRVAK) the chain is Cytoplasmic. The chain crosses the membrane as a helical span at residues 155 to 175 (LASAAVWVFSLLMSLPLLVFA). The Extracellular segment spans residues 176-195 (DVQEGWGTCNLSWPEPVGLW). N-linked (GlcNAc...) asparagine glycosylation occurs at asparagine 185. Residues 196–220 (GAAFITYTSVLGFFGPLLVICLCYL) traverse the membrane as a helical segment. The Cytoplasmic portion of the chain corresponds to 221–246 (LIVVKVKAAGMRVGSSRRRRSERKVT). A helical membrane pass occupies residues 247 to 272 (RMVVVVVLVFVGCWLPFFIVNIVNLA). Residues 273–282 (FTLPEEPTSA) are Extracellular-facing. A helical transmembrane segment spans residues 283 to 307 (GLYFFVVVLSYANSCANPLLYGFLS). The Cytoplasmic segment spans residues 308-362 (DNFRQSFRKALCLRRGYGVEDADAIEPRPDKSGRPQTTLPTRSCEANGLMQTSRL). Cysteine 319 is lipidated: S-palmitoyl cysteine; by ZDHHC5. A disordered region spans residues 330–362 (DAIEPRPDKSGRPQTTLPTRSCEANGLMQTSRL).

This sequence belongs to the G-protein coupled receptor 1 family. Heterodimer with SSTR2. Heterodimerization with SSTR2 increases cell growth inhibition activity of SSTR2. Post-translationally, palmitoylated at Cys-319 by ZDHHC5, but not ZDHHC8. Palmitoylation creates an additional intracellular loop which is thought to be important for efficient coupling to G-proteins and may target the protein to lipid rafts. In terms of tissue distribution, expressed in adult brain but not in liver, heart, spleen, or kidney.

The protein resides in the cell membrane. Functionally, receptor for somatostatin-28. The activity of this receptor is mediated by G proteins which inhibit adenylyl cyclase. Increases cell growth inhibition activity of SSTR2 following heterodimerization. The sequence is that of Somatostatin receptor type 5 (Sstr5) from Mus musculus (Mouse).